Reading from the N-terminus, the 502-residue chain is MSGLAIDMTGISKAFGPVKALVDADLRVARGTIHGLVGQNGAGKSTIIKVLAGILKPDSGRITINGTRVESLTPASVERLGVHFIHQERLLVPTATVAEAVFLNYELRFGPFLRPGAMKRRAEELIRTHFGLELPGDTLVRDLTTAQQKIVQITRALAQEAQVLVLDEPTAALVKREVDSLFAVLRNLRAQGIAVIFISHYMQEIEDLCDEVTVMRNGTDVGVVRPGETSIDEIVSMMIARDVGEMFPCRSHALGAPVLRVEGLSQAGHFRNVSFEVRAGEVLGITGLLGSGVKELVECLFGLEQPDAGSVTIDGEVRRFANPGRAVQGRVALVPEDRRAHGVATDMSVRDNITIASLERYMTRGFVSRARENEAVDGFIRELSIKTPHRDQLVRNLSGGNQQKVALAKWLSCQSRVYVLDEPTVAVDVGAKVEIYTLLNRLAAEGAAILFLSSDLLEIAGFCDRALVVYRGTLNGEFAGETLDSDLLLAAASGARAQRKEA.

ABC transporter domains are found at residues 6–242 and 253–496; these read IDMT…IARD and ALGA…SGAR. Residue 38–45 coordinates ATP; the sequence is GQNGAGKS.

The protein belongs to the ABC transporter superfamily. Ribose importer (TC 3.A.1.2.1) family. In terms of assembly, the complex is composed of an ATP-binding protein (RbsA), two transmembrane proteins (RbsC) and a solute-binding protein (RbsB).

The protein resides in the cell inner membrane. It carries out the reaction D-ribose(out) + ATP + H2O = D-ribose(in) + ADP + phosphate + H(+). Its function is as follows. Part of the ABC transporter complex RbsABC involved in ribose import. Responsible for energy coupling to the transport system. In Cereibacter sphaeroides (strain ATCC 17023 / DSM 158 / JCM 6121 / CCUG 31486 / LMG 2827 / NBRC 12203 / NCIMB 8253 / ATH 2.4.1.) (Rhodobacter sphaeroides), this protein is Ribose import ATP-binding protein RbsA.